We begin with the raw amino-acid sequence, 241 residues long: ATP synthase subunit a (241 aa).

Helical transmembrane passes span 30 to 50 (GQVF…ISLG), 91 to 111 (FIGT…LIPW), 128 to 148 (INTT…AGLS), 193 to 213 (LVVG…VMFL), and 214 to 234 (GLFT…YYIG).

Belongs to the ATPase A chain family. As to quaternary structure, F-type ATPases have 2 components, CF(1) - the catalytic core - and CF(0) - the membrane proton channel. CF(1) has five subunits: alpha(3), beta(3), gamma(1), delta(1), epsilon(1). CF(0) has four main subunits: a, b, b' and c.

The protein localises to the cellular thylakoid membrane. Functionally, key component of the proton channel; it plays a direct role in the translocation of protons across the membrane. This is ATP synthase subunit a from Prochlorococcus marinus (strain MIT 9301).